Consider the following 327-residue polypeptide: Cyclic AMP-responsive element-binding protein 1 (327 aa).

2 disordered regions span residues Met-1–Ala-29 and Ser-94–Ile-113. A KID domain is found at Asp-8 to Thr-146. Positions Ala-20–Ala-29 are enriched in polar residues. A Phosphoserine; by CaMK1, CaMK2, CaMK4, PKB/AKT1 or PKB/AKT2, RPS6KA3, RPS6KA4, RPS6KA5 and SGK1 modification is found at Ser-119. A Glycyl lysine isopeptide (Lys-Gly) (interchain with G-Cter in SUMO2) cross-link involves residue Lys-122. The tract at residues Asp-126–Pro-149 is disordered. Residue Ser-128 is modified to Phosphoserine; by CaMK2. Phosphoserine; by HIPK2 is present on Ser-257. One can recognise a bZIP domain in the interval Ala-269–Asp-327. Residues Arg-270–Lys-295 are basic motif. Glycyl lysine isopeptide (Lys-Gly) (interchain with G-Cter in SUMO1) cross-links involve residues Lys-271 and Lys-290. Residues Leu-297–Leu-318 form a leucine-zipper region.

It belongs to the bZIP family. In terms of assembly, interacts with PPRC1. Binds DNA as a dimer. This dimer is stabilized by magnesium ions. Interacts, through the bZIP domain, with the coactivators CRTC1/TORC1, CRTC2/TORC2 and CRTC3/TORC3. When phosphorylated on Ser-119, binds CREBBP. Interacts with CREBL2; regulates CREB1 phosphorylation, stability and transcriptional activity. Interacts (phosphorylated form) with TOX3. Interacts with ARRB1. Binds to HIPK2. Interacts with SGK1. Interacts with TSSK4; this interaction facilitates phosphorylation on Ser-119. Forms a complex with KMT2A and CREBBP. Interacts with TOX4; CREB1 is required for full induction of TOX4-dependent activity and the interaction is increased by cAMP and inhibited by insulin. In terms of processing, phosphorylation of Ser-119 allows CREBBP binding. Stimulated by phosphorylation. Phosphorylation of both Ser-128 and Ser-119 in the SCN regulates the activity of CREB and participate in circadian rhythm generation. Phosphorylated upon calcium influx by CaMK4 and CaMK2 on Ser-119. CaMK4 is much more potent than CaMK2 in activating CREB. Phosphorylated by CaMK2 on Ser-128. Phosphorylation of Ser-128 blocks CREB-mediated transcription even when Ser-119 is phosphorylated. Phosphorylated by CaMK1. Phosphorylation of Ser-257 by HIPK2 in response to genotoxic stress promotes CREB1 activity, facilitating the recruitment of the coactivator CBP. Phosphorylated at Ser-119 by RPS6KA3, RPS6KA4 and RPS6KA5 in response to mitogenic or stress stimuli. CREBL2 positively regulates phosphorylation at Ser-119 thereby stimulating CREB1 transcriptional activity. In liver, phosphorylation is induced by fasting or glucagon in a circadian fashion. Phosphorylated by TSSK4 on Ser-119. Sumoylated with SUMO1. Sumoylation on Lys-290, but not on Lys-271, is required for nuclear localization of this protein. Sumoylation is enhanced under hypoxia, promoting nuclear localization and stabilization.

The protein resides in the nucleus. In terms of biological role, phosphorylation-dependent transcription factor that stimulates transcription upon binding to the DNA cAMP response element (CRE), a sequence present in many viral and cellular promoters. Transcription activation is enhanced by the TORC coactivators which act independently of Ser-119 phosphorylation. Involved in different cellular processes including the synchronization of circadian rhythmicity and the differentiation of adipose cells. Regulates the expression of apoptotic and inflammatory response factors in cardiomyocytes in response to ERFE-mediated activation of AKT signaling. This is Cyclic AMP-responsive element-binding protein 1 (Creb1) from Rattus norvegicus (Rat).